We begin with the raw amino-acid sequence, 121 residues long: MDNKCTFSRKEDGVCEYKKNEVRTSQSEVPKTSIKKSDNGEKDEKEEKELNLENIIKKASANPQQRKNQKKYHRASSDCDSSDDEKDEPYYHGSKASTTLTREQALKLSLRKKIDERKLNK.

The disordered stretch occupies residues 20–98 (NEVRTSQSEV…PYYHGSKAST (79 aa)). The segment covering 35 to 51 (KKSDNGEKDEKEEKELN) has biased composition (basic and acidic residues).

This is an uncharacterized protein from Invertebrate iridescent virus 6 (IIV-6).